The following is an 819-amino-acid chain: Lysine-specific demethylase JMJ18 (819 aa).

Positions 1-39 are disordered; the sequence is MENPPLESEIKEDMSLKNHPPDKDKDKDTIMEQPSSPRH. The span at 8–30 shows a compositional bias: basic and acidic residues; that stretch reads SEIKEDMSLKNHPPDKDKDKDTI. In terms of domain architecture, JmjN spans 59–100; that stretch reads APVFTPSLEEFVDPLAYIEKIRPLAEPYGICRIIPPSTWKPP. The disordered stretch occupies residues 120–171; it reads TVDLLQNREPMKKKPKSRKRKRRRNSRMGSSKRRSGSSPAESTSSPEAEEKF. The Nuclear localization signal signature appears at 130 to 137; the sequence is MKKKPKSR. Basic residues predominate over residues 130 to 154; the sequence is MKKKPKSRKRKRRRNSRMGSSKRRS. Low complexity predominate over residues 155-165; that stretch reads GSSPAESTSSP. One can recognise a JmjC domain in the interval 261–427; sequence QYTLSGWNLN…HGQNAVELYS (167 aa). Positions 307, 309, and 395 each coordinate Fe cation. Positions 519, 522, 533, 535, 542, 545, 550, and 552 each coordinate Zn(2+). The segment at 519 to 571 adopts a C5HC2 zinc-finger fold; it reads CFSCFYDLHLSASGCKCSPEEYACLKHADDLCSCDVKDGFILLRYTMDELSSL. The FYR N-terminal domain occupies 644 to 702; that stretch reads ASENLGVSVEPINLGFLIFGKLWCNKYAIFPKGFRSRVKFYNVLDPTRMSNYISEVLDA. An FYR C-terminal domain is found at 704 to 788; the sequence is LMGPLFRVTL…HRLVEYWNHK (85 aa).

Belongs to the JARID1 histone demethylase family. The cofactor is Fe(2+). As to expression, expressed in vascular tissues of roots, cotyledons, leaves and flowers. Expressed predominantly in phloem companion cells of roots. Present in inflorescences, roots, siliques, leaves and stems.

Its subcellular location is the nucleus. The enzyme catalyses N(6),N(6),N(6)-trimethyl-L-lysyl(4)-[histone H3] + 2-oxoglutarate + O2 = N(6),N(6)-dimethyl-L-lysyl(4)-[histone H3] + formaldehyde + succinate + CO2. The catalysed reaction is N(6),N(6)-dimethyl-L-lysyl(4)-[histone H3] + 2-oxoglutarate + O2 = N(6)-methyl-L-lysyl(4)-[histone H3] + formaldehyde + succinate + CO2. Functionally, histone demethylase that demethylates 'Lys-4' (H3K4me) of histone H3 with a specific activity for H3K4me3 and H3K4me2. No activity on H3K9me3/2, H3K27me3/2 and H3K36me3/2. Involved in the control of flowering time by demethylating H3K4me3 at the FLC locus and repressing its expression. The repression of FLC level and reduction in H3K4me3 at the FLC locus results in induction of the flowering activator FT, which is a downstream target of FLC. This chain is Lysine-specific demethylase JMJ18, found in Arabidopsis thaliana (Mouse-ear cress).